The sequence spans 128 residues: Large ribosomal subunit protein bL17 (128 aa).

Belongs to the bacterial ribosomal protein bL17 family. Part of the 50S ribosomal subunit. Contacts protein L32.

This chain is Large ribosomal subunit protein bL17, found in Vibrio cholerae serotype O1 (strain ATCC 39541 / Classical Ogawa 395 / O395).